A 433-amino-acid polypeptide reads, in one-letter code: Transcobalamin-1 (433 aa).

The N-terminal stretch at 1-23 (MRQSHQLPLVGLLLFSFIPSQLC) is a signal peptide. A globular N-terminal alpha domain region spans residues 24 to 310 (EICEVSEENY…DINKDSSCVS (287 aa)). Disulfide bonds link Cys26/Cys265, Cys105/Cys308, and Cys155/Cys197. 142-146 (TNYYQ) lines the cyanocob(III)alamin pocket. A glycan (N-linked (GlcNAc...) asparagine) is linked at Asn160. Residue Asp186 participates in cyanocob(III)alamin binding. A glycan (N-linked (GlcNAc...) asparagine) is linked at Asn216. Cyanocob(III)alamin is bound by residues Asn240 and Gln289. Residues 311–332 (ASGNFNISADEPITVTPPDSQS) form a flexible linker region. N-linked (GlcNAc...) asparagine glycans are attached at residues Asn316, Asn337, Asn343, Asn349, Asn354, and Asn369. Residues 333–433 (YISVNYSVRI…ENLEVRWSKY (101 aa)) are globular C-terminal beta domain. Residue 385–386 (YI) coordinates cyanocob(III)alamin. Residues Cys388 and Cys393 are joined by a disulfide bond. Cyanocob(III)alamin contacts are provided by residues 402-404 (WEL), Leu411, and Tyr433.

The protein belongs to the eukaryotic cobalamin transport proteins family. Post-translationally, contains about 30% carbohydrates. Produced by the salivary glands of the oral cavity, in response to ingestion of food. Major constituent of secondary granules in neutrophils.

It localises to the secreted. Binds vitamin B12 with femtomolar affinity and protects it from the acidic environment of the stomach. In Homo sapiens (Human), this protein is Transcobalamin-1 (TCN1).